Consider the following 167-residue polypeptide: Schlafen-like protein (167 aa).

This sequence belongs to the Schlafen family. Subgroup poxviridae B3 subfamily.

The chain is Schlafen-like protein from Bos taurus (Bovine).